Consider the following 853-residue polypeptide: G-type lectin S-receptor-like serine/threonine-protein kinase SRK (853 aa).

The N-terminal stretch at 1–31 (MRGELPNKHHSYTFFVFLFFFLILFPDLSIS) is a signal peptide. At 32–441 (VNTLSATESL…FGERRTIRGK (410 aa)) the chain is on the extracellular side. Residues 34–154 (TLSATESLTI…KINESDEFLW (121 aa)) enclose the Bulb-type lectin domain. Residues asparagine 46, asparagine 120, asparagine 147, and asparagine 243 are each glycosylated (N-linked (GlcNAc...) asparagine). The EGF-like; atypical domain maps to 293-329 (PKDTCDLYGICGPYAYCDMSTSPTCNCIKGFQPLSPQ). 4 cysteine pairs are disulfide-bonded: cysteine 297-cysteine 309, cysteine 303-cysteine 317, cysteine 378-cysteine 403, and cysteine 382-cysteine 388. One can recognise a PAN domain in the interval 348–428 (CGEDRFFRLM…DGQDLFVRLA (81 aa)). N-linked (GlcNAc...) asparagine glycosylation is present at asparagine 387. Residues 442 to 462 (IIGLIIGISLMLVLSFIIYCF) form a helical membrane-spanning segment. Residues 463-853 (WKKKQKRARA…QITVSVINAR (391 aa)) lie on the Cytoplasmic side of the membrane. Residues 524–802 (FSDSNILGRG…PKMSSVVLML (279 aa)) form the Protein kinase domain. ATP contacts are provided by residues 530–538 (LGRGGFGIV) and lysine 552. Serine 558 carries the post-translational modification Phosphoserine. The interval 613–631 (TQSSNKLNWQTRFSIINGI) is caM-binding. Aspartate 650 acts as the Proton acceptor in catalysis. Phosphoserine is present on residues serine 654 and serine 667. Threonine 684 is subject to Phosphothreonine. The segment at 807–838 (GEIPQPKRPGYCVGRSSLDTADSSSSTKRDSE) is disordered. Low complexity predominate over residues 822-832 (SSLDTADSSSS). Serine 831 is subject to Phosphoserine.

This sequence belongs to the protein kinase superfamily. Ser/Thr protein kinase family.

The protein resides in the cell membrane. It carries out the reaction L-seryl-[protein] + ATP = O-phospho-L-seryl-[protein] + ADP + H(+). It catalyses the reaction L-threonyl-[protein] + ATP = O-phospho-L-threonyl-[protein] + ADP + H(+). In terms of biological role, female specificity determinant of self-incompatibility. The chain is G-type lectin S-receptor-like serine/threonine-protein kinase SRK (SRK) from Arabidopsis thaliana (Mouse-ear cress).